Reading from the N-terminus, the 809-residue chain is ATP-dependent RNA helicase HrpB (809 aa).

One can recognise a Helicase ATP-binding domain in the interval 14–177 (LTALDCAPQV…LPEAPVVISE (164 aa)). 27–34 (APTGAGKS) lines the ATP pocket. A DEFH box motif is present at residues 123–126 (DEFH). The region spanning 195-368 (RFDDAVAVAT…GLLMELLQWG (174 aa)) is the Helicase C-terminal domain. A disordered region spans residues 788 to 809 (PKHVWPDDPANTAPTRRTKKYS).

Belongs to the DEAD box helicase family.

The catalysed reaction is ATP + H2O = ADP + phosphate + H(+). This is ATP-dependent RNA helicase HrpB (hrpB) from Escherichia coli (strain K12).